We begin with the raw amino-acid sequence, 368 residues long: tRNA-specific 2-thiouridylase MnmA (368 aa).

ATP contacts are provided by residues 6 to 13 and Met32; that span reads ALSGGVDS. Catalysis depends on Cys92, which acts as the Nucleophile. Cys92 and Cys186 are oxidised to a cystine. Position 116 (Gly116) interacts with ATP. Residues 134 to 136 are interaction with tRNA; that stretch reads KDQ. Catalysis depends on Cys186, which acts as the Cysteine persulfide intermediate. The tract at residues 292–293 is interaction with tRNA; sequence RY.

Belongs to the MnmA/TRMU family.

It localises to the cytoplasm. It catalyses the reaction S-sulfanyl-L-cysteinyl-[protein] + uridine(34) in tRNA + AH2 + ATP = 2-thiouridine(34) in tRNA + L-cysteinyl-[protein] + A + AMP + diphosphate + H(+). Catalyzes the 2-thiolation of uridine at the wobble position (U34) of tRNA, leading to the formation of s(2)U34. This chain is tRNA-specific 2-thiouridylase MnmA, found in Campylobacter hominis (strain ATCC BAA-381 / DSM 21671 / CCUG 45161 / LMG 19568 / NCTC 13146 / CH001A).